The chain runs to 406 residues: MAATPHRHLLQPCKNPAISSSETLKPSSSFSLSSNPSIPLIRRRLPTFRCDFQNRRKWMNVDHHISKLNPIQIVPNSRRFQMSSNQENSVEFSKKVCLFYCPETKALAERIAAQSDAIQLRSISWRTFEDGFPNLFISNAQGIRGKHVAFLASFSSPGVIFEQLSVIYALPKLFVASFKLVLPFFPTGTSERMEDEGDVATAFTLARILSNIPISREGPTSLVTFDIHALQERFYFGDNILPCFESGIPLLKKKLQQLPDSDNITIAFPDDGAWKRFHKQLQHFPMIVCAKVREGDQRIVRLKEGDPTGRHVVIVDDLVQSGGTLIECQKVLAAHGAAKVSAYVTHGIFPNKSWERFKPDTAGCPEEGMTHFWITDSCPLTVKMVKNRPPFEVISLAGSIAAALQI.

A disordered region spans residues 1–32 (MAATPHRHLLQPCKNPAISSSETLKPSSSFSL). The N-terminal 87 residues, 1–87 (MAATPHRHLL…RRFQMSSNQE (87 aa)), are a transit peptide targeting the mitochondrion. Residues 18 to 32 (ISSSETLKPSSSFSL) show a composition bias toward low complexity. D226 and H228 together coordinate Mg(2+). The binding of phosphoribosylpyrophosphate stretch occupies residues 309-324 (GRHVVIVDDLVQSGGT).

The protein belongs to the ribose-phosphate pyrophosphokinase family.

Its subcellular location is the mitochondrion. It carries out the reaction D-ribose 5-phosphate + ATP = 5-phospho-alpha-D-ribose 1-diphosphate + AMP + H(+). This is Ribose-phosphate pyrophosphokinase 3, mitochondrial (PRS3) from Spinacia oleracea (Spinach).